We begin with the raw amino-acid sequence, 361 residues long: Alanine racemase 2 (361 aa).

The active-site Proton acceptor; specific for D-alanine is Lys-30. Lys-30 carries the post-translational modification N6-(pyridoxal phosphate)lysine. Arg-122 provides a ligand contact to substrate. Residue Tyr-256 is the Proton acceptor; specific for L-alanine of the active site. Met-303 is a substrate binding site.

The protein belongs to the alanine racemase family. Requires pyridoxal 5'-phosphate as cofactor.

It carries out the reaction L-alanine = D-alanine. Its pathway is amino-acid biosynthesis; D-alanine biosynthesis; D-alanine from L-alanine: step 1/1. Functionally, catalyzes the interconversion of L-alanine and D-alanine. May also act on other amino acids. This is Alanine racemase 2 (alr2) from Staphylococcus aureus (strain COL).